We begin with the raw amino-acid sequence, 204 residues long: Apoptosis regulator R11 (204 aa).

Residues 101–120 carry the BH1 motif; it reads ELFRDGTNWGRIVAFFSFGR. Positions 152–167 match the BH2 motif; sequence PWMQENGGWEAFVGLY. A helical transmembrane segment spans residues 181 to 198; sequence RFGRLLTIVMLTGVFALV.

The protein belongs to the Bcl-2 family.

It localises to the membrane. Its function is as follows. Confers strong protection against cell death. This chain is Apoptosis regulator R11, found in Xenopus laevis (African clawed frog).